Reading from the N-terminus, the 206-residue chain is GTP cyclohydrolase 1 (206 aa).

Cys98, His101, and Cys169 together coordinate Zn(2+).

The protein belongs to the GTP cyclohydrolase I family. As to quaternary structure, toroid-shaped homodecamer, composed of two pentamers of five dimers.

The enzyme catalyses GTP + H2O = 7,8-dihydroneopterin 3'-triphosphate + formate + H(+). Its pathway is cofactor biosynthesis; 7,8-dihydroneopterin triphosphate biosynthesis; 7,8-dihydroneopterin triphosphate from GTP: step 1/1. This is GTP cyclohydrolase 1 from Helicobacter hepaticus (strain ATCC 51449 / 3B1).